A 109-amino-acid polypeptide reads, in one-letter code: uncharacterized protein (109 aa).

Positions 1–25 (METKPNALTGTSLSSTSGQTTQKSI) are disordered. Over residues 8-22 (LTGTSLSSTSGQTTQ) the composition is skewed to low complexity. A helical transmembrane segment spans residues 42-62 (TFGLMAILNLALLLWTLLATL). A disordered region spans residues 84-109 (TTLQKNTPSAKNGLKNTTNKHSHEDM). The segment covering 91-102 (PSAKNGLKNTTN) has biased composition (polar residues).

The protein resides in the host membrane. This is an uncharacterized protein from Bdellovibrio phage phiMH2K (Bacteriophage phiMH2K).